We begin with the raw amino-acid sequence, 248 residues long: PF03932 family protein CutC (248 aa).

Belongs to the CutC family. As to quaternary structure, homodimer.

It is found in the cytoplasm. The protein is PF03932 family protein CutC of Shigella dysenteriae serotype 1 (strain Sd197).